A 228-amino-acid polypeptide reads, in one-letter code: L-ribulose-5-phosphate 4-epimerase UlaF (228 aa).

Residues 26–27, 43–44, and 72–73 each bind substrate; these read GN, SG, and SS. Zn(2+) is bound by residues D74, H93, and H95. Catalysis depends on D118, which acts as the Proton donor/acceptor. A Zn(2+)-binding site is contributed by H167. Y225 serves as the catalytic Proton donor/acceptor.

It belongs to the aldolase class II family. AraD/FucA subfamily. It depends on Zn(2+) as a cofactor.

It carries out the reaction L-ribulose 5-phosphate = D-xylulose 5-phosphate. It functions in the pathway cofactor degradation; L-ascorbate degradation; D-xylulose 5-phosphate from L-ascorbate: step 4/4. Its function is as follows. Catalyzes the isomerization of L-ribulose 5-phosphate to D-xylulose 5-phosphate. Is involved in the anaerobic L-ascorbate utilization. This Escherichia coli O7:K1 (strain IAI39 / ExPEC) protein is L-ribulose-5-phosphate 4-epimerase UlaF.